The primary structure comprises 563 residues: Arginine--tRNA ligase (563 aa).

A 'HIGH' region motif is present at residues 119–129; that stretch reads ANPTGPLHVGR.

It belongs to the class-I aminoacyl-tRNA synthetase family.

The protein localises to the cytoplasm. It carries out the reaction tRNA(Arg) + L-arginine + ATP = L-arginyl-tRNA(Arg) + AMP + diphosphate. The chain is Arginine--tRNA ligase from Methanocella arvoryzae (strain DSM 22066 / NBRC 105507 / MRE50).